We begin with the raw amino-acid sequence, 163 residues long: Small ribosomal subunit protein uS9 (163 aa).

The segment covering Met1 to Asn25 has biased composition (low complexity). The segment at Met1–Gly40 is disordered.

It belongs to the universal ribosomal protein uS9 family.

The protein is Small ribosomal subunit protein uS9 of Bifidobacterium animalis subsp. lactis (strain AD011).